The sequence spans 217 residues: Vesicle transport through interaction with t-SNAREs homolog 1A (217 aa).

At 1-192 (MSSDFEGYEQ…GMLRRIIQNR (192 aa)) the chain is on the cytoplasmic side. Coiled-coil stretches lie at residues 31 to 92 (PDEK…KRSR) and 112 to 178 (ENQR…GKSS). The chain crosses the membrane as a helical span at residues 193–213 (ILLVILGIIVVITILMAITFS). At 214 to 217 (VRRH) the chain is on the extracellular side.

The protein belongs to the VTI1 family. Interacts with distinct SNARE complexes that contain either STX5 or STX6. Interacts with NAPA and, to a lesser extent, with NAPG. Identified in a complex containing STX6, STX12, VAMP4 and VTI1A.

It localises to the cytoplasmic vesicle. Its subcellular location is the golgi apparatus membrane. In terms of biological role, V-SNARE that mediates vesicle transport pathways through interactions with t-SNAREs on the target membrane. These interactions are proposed to mediate aspects of the specificity of vesicle trafficking and to promote fusion of the lipid bilayers. Involved in vesicular transport from the late endosomes to the trans-Golgi network. Along with VAMP7, involved in an non-conventional RAB1-dependent traffic route to the cell surface used by KCNIP1 and KCND2. May be involved in increased cytokine secretion associated with cellular senescence. This is Vesicle transport through interaction with t-SNAREs homolog 1A (VTI1A) from Homo sapiens (Human).